The chain runs to 733 residues: DNA repair and recombination protein RAD54-like (733 aa).

The disordered stretch occupies residues 1-35 (LAKRKAGGEEEDGEWRPPATQKRQKAGSEAESADC). One can recognise a Helicase ATP-binding domain in the interval 159–334 (SRRIPGSHGC…FSLVHFVNSG (176 aa)). 172-179 (DEMGLGKT) lines the ATP pocket. The short motif at 285-288 (DEGH) is the DEGH box element. The Helicase C-terminal domain maps to 488-642 (LVLDYILAVT…CVVDEEQDVE (155 aa)). Lysine 504 is modified (N6-acetyllysine). The residue at position 561 (serine 561) is a Phosphoserine; by NEK1.

It belongs to the SNF2/RAD54 helicase family. Homohexamer. Interacts (via N-terminus) with RAD51. Interacts with NAP1L1. Interacts with BRD9; this interaction orchestrates RAD51-RAD54 complex formation. Post-translationally, acetylated. Acetylation promotes interaction with BRD9, and subsequently with RAD54, which is essential for homologous recombination (HR). In terms of processing, phosphorylated. Phosphorylation at Ser-561 by NEK1 specifically in G2 phase allows efficient removal of RAD51 filaments from DNA. Highly expressed in bursa, thymus, testis, and ovary. Low level of expression seen in all other organs tested.

The protein resides in the nucleus. Plays an essential role in homologous recombination (HR) which is a major pathway for repairing DNA double-strand breaks (DSBs), single-stranded DNA (ssDNA) gaps, and stalled or collapsed replication forks. Acts as a molecular motor during the homology search and guides RAD51 ssDNA along a donor dsDNA thereby changing the homology search from the diffusion-based mechanism to a motor-guided mechanism. Plays also an essential role in RAD51-mediated synaptic complex formation which consists of three strands encased in a protein filament formed once homology is recognized. Once DNA strand exchange occured, dissociates RAD51 from nucleoprotein filaments formed on dsDNA. In Gallus gallus (Chicken), this protein is DNA repair and recombination protein RAD54-like (RAD54L).